The following is a 608-amino-acid chain: Glutamyl-tRNA(Gln) amidotransferase subunit E (608 aa).

The disordered stretch occupies residues 402–422 (EETRGANPDGTTRFLRPRPGA).

Belongs to the GatB/GatE family. GatE subfamily. As to quaternary structure, heterodimer of GatD and GatE.

The enzyme catalyses L-glutamyl-tRNA(Gln) + L-glutamine + ATP + H2O = L-glutaminyl-tRNA(Gln) + L-glutamate + ADP + phosphate + H(+). Its function is as follows. Allows the formation of correctly charged Gln-tRNA(Gln) through the transamidation of misacylated Glu-tRNA(Gln) in organisms which lack glutaminyl-tRNA synthetase. The reaction takes place in the presence of glutamine and ATP through an activated gamma-phospho-Glu-tRNA(Gln). The GatDE system is specific for glutamate and does not act on aspartate. This Pyrobaculum calidifontis (strain DSM 21063 / JCM 11548 / VA1) protein is Glutamyl-tRNA(Gln) amidotransferase subunit E.